The sequence spans 317 residues: L-lactate dehydrogenase 2 (317 aa).

Residues Val-16, Asp-37, Lys-42, Tyr-68, and 82 to 83 contribute to the NAD(+) site; that span reads GA. Residues Gln-85 and Arg-91 each contribute to the substrate site. Residues Thr-104, 121 to 123, and Thr-146 each bind NAD(+); that span reads ASN. 123-126 is a substrate binding site; it reads NPVD. 151–154 is a binding site for substrate; it reads DTTR. Positions 156 and 171 each coordinate beta-D-fructose 1,6-bisphosphate. The Proton acceptor role is filled by His-178. Tyr-223 is subject to Phosphotyrosine. Thr-232 serves as a coordination point for substrate.

Belongs to the LDH/MDH superfamily. LDH family. Homotetramer.

Its subcellular location is the cytoplasm. It carries out the reaction (S)-lactate + NAD(+) = pyruvate + NADH + H(+). Its pathway is fermentation; pyruvate fermentation to lactate; (S)-lactate from pyruvate: step 1/1. Allosterically activated by fructose 1,6-bisphosphate (FBP). Catalyzes the conversion of lactate to pyruvate. This chain is L-lactate dehydrogenase 2, found in Enterococcus faecalis (strain ATCC 700802 / V583).